An 882-amino-acid polypeptide reads, in one-letter code: Apoptosis-linked gene 2-interacting protein X 1 (882 aa).

The 394-residue stretch at 5–398 folds into the BRO1 domain; sequence GFLSAPLKST…VRMREATQLM (394 aa). The interval 743-882 is disordered; the sequence is GTNAAQSPAN…GGGGGANPFQ (140 aa). The segment covering 752 to 763 has biased composition (pro residues); sequence NAPPRPPPPRPA. Low complexity-rich tracts occupy residues 791 to 830 and 847 to 871; these read NPYQ…QYQP and QQQW…QNQQ. A compositionally biased stretch (gly residues) spans 872 to 882; the sequence is QGGGGGANPFQ.

Its function is as follows. Required for lin-12 degradation after it has been internalised in the vulval precursor cells. In Caenorhabditis elegans, this protein is Apoptosis-linked gene 2-interacting protein X 1 (alx-1).